We begin with the raw amino-acid sequence, 406 residues long: Phosphatidylinositol 5-phosphate 4-kinase type-2 alpha (406 aa).

A2 is subject to N-acetylalanine. T3 bears the Phosphothreonine mark. Position 14 is a phosphoserine (S14). The 373-residue stretch at 33 to 405 folds into the PIPK domain; that stretch reads ASDPLLSVLM…RFLDFIGHIL (373 aa). The required for interaction with PIP5K1A stretch occupies residues 59–65; sequence VMLMPDD. N6-acetyllysine occurs at positions 89 and 145. The disordered stretch occupies residues 288–329; that stretch reads QEEVECEENDGEEEGESDGTHPVGTPPDSPGNTLNSSPPLAP. The segment covering 289 to 304 has biased composition (acidic residues); the sequence is EEVECEENDGEEEGES.

Homodimer. Interacts with PIP4K2B; the interaction may regulate localization to the nucleus. Probably interacts with PIP5K1A; the interaction inhibits PIP5K1A kinase activity. Phosphorylated in tyrosines. Phosphorylation is induced by light and increases kinase activity.

It localises to the cell membrane. Its subcellular location is the nucleus. The protein resides in the lysosome. It is found in the cytoplasm. The protein localises to the photoreceptor inner segment. It localises to the cell projection. Its subcellular location is the cilium. The protein resides in the photoreceptor outer segment. The catalysed reaction is a 1,2-diacyl-sn-glycero-3-phospho-(1D-myo-inositol-5-phosphate) + ATP = a 1,2-diacyl-sn-glycero-3-phospho-(1D-myo-inositol-4,5-bisphosphate) + ADP + H(+). It carries out the reaction 1,2-dihexadecanoyl-sn-glycero-3-phospho-(1D-myo-inositol-5-phosphate) + ATP = 1,2-dihexadecanoyl-sn-glycero-3-phospho-(1D-myo-inositol-4,5-bisphosphate) + ADP + H(+). The enzyme catalyses 1,2-dihexadecanoyl-sn-glycero-3-phospho-(1D-myo-inositol-5-phosphate) + GTP = 1,2-dihexadecanoyl-sn-glycero-3-phospho-(1D-myo-inositol-4,5-bisphosphate) + GDP + H(+). In rod outer segments, activated by light. In terms of biological role, catalyzes the phosphorylation of phosphatidylinositol 5-phosphate (PtdIns5P) on the fourth hydroxyl of the myo-inositol ring, to form phosphatidylinositol 4,5-bisphosphate (PtdIns(4,5)P2). Has both ATP- and GTP-dependent kinase activities. May exert its function by regulating the levels of PtdIns5P, which functions in the cytosol by increasing AKT activity and in the nucleus signals through ING2. May regulate the pool of cytosolic PtdIns5P in response to the activation of tyrosine phosphorylation. May be involved in thrombopoiesis, and the terminal maturation of megakaryocytes and regulation of their size. May negatively regulate insulin-stimulated glucose uptake by lowering the levels of PtdIns5P. This chain is Phosphatidylinositol 5-phosphate 4-kinase type-2 alpha (PIP4K2A), found in Sus scrofa (Pig).